Here is a 55-residue protein sequence, read N- to C-terminus: Large ribosomal subunit protein bL33B (55 aa).

It belongs to the bacterial ribosomal protein bL33 family.

This chain is Large ribosomal subunit protein bL33B, found in Mycobacteroides abscessus (strain ATCC 19977 / DSM 44196 / CCUG 20993 / CIP 104536 / JCM 13569 / NCTC 13031 / TMC 1543 / L948) (Mycobacterium abscessus).